The chain runs to 552 residues: MGSKEFYGGIEKSPNRSFLKAMGLTDKDISNGLVGVGVAWSESGPCNIHALSLGNKAAEGVSHSGMTPRLFATPLVIDGMAMGNEGMRYSLPSREVIANTVELTIKGHGFDAFVGISGCDKTTPGMLMGAARINVPSIVMYGGSTLPGYYMGKKIAVGDVYEAVGSYQAGRMTVEELKIMENSAVPTAGACGGLYTANTMAFMSEGLGMALTGSASPPAVDSGKTKFAFETGAAIKTLVENDIKPRDVMTYEAFENAITLLMASGGSTNVVLHLLAIAHEAHVNIKLDDFDRIGNKVPEIVNMKPGGPYTMAELNEIGGVPVVMKKLLDKGFLHGDVLTVTGKTLRENLNEIKILNIKQDIVYDIERPKMRTGGIKILRGNIAREGSVFKASASSVMKHTGPAKVFDGEEAAFRALMDNKIERGDVIVIRYEGPKGGPGMREMLAVTAAVVGKGFDRDVALITDGRFSGATRGIMIGHVAPEAFVGGEIALLKDGDVITIDGENGLLKASVSDEEFNRRRESWRPPEPKYSTGYLSQYAKLVGSASRGAVLE.

C46 contacts [2Fe-2S] cluster. A Mg(2+)-binding site is contributed by D78. Position 119 (C119) interacts with [2Fe-2S] cluster. 2 residues coordinate Mg(2+): D120 and K121. At K121 the chain carries N6-carboxylysine. C191 contributes to the [2Fe-2S] cluster binding site. E442 is a Mg(2+) binding site. S468 acts as the Proton acceptor in catalysis.

This sequence belongs to the IlvD/Edd family. As to quaternary structure, homodimer. [2Fe-2S] cluster is required as a cofactor. It depends on Mg(2+) as a cofactor.

It carries out the reaction (2R)-2,3-dihydroxy-3-methylbutanoate = 3-methyl-2-oxobutanoate + H2O. The enzyme catalyses (2R,3R)-2,3-dihydroxy-3-methylpentanoate = (S)-3-methyl-2-oxopentanoate + H2O. Its pathway is amino-acid biosynthesis; L-isoleucine biosynthesis; L-isoleucine from 2-oxobutanoate: step 3/4. The protein operates within amino-acid biosynthesis; L-valine biosynthesis; L-valine from pyruvate: step 3/4. Its function is as follows. Functions in the biosynthesis of branched-chain amino acids. Catalyzes the dehydration of (2R,3R)-2,3-dihydroxy-3-methylpentanoate (2,3-dihydroxy-3-methylvalerate) into 2-oxo-3-methylpentanoate (2-oxo-3-methylvalerate) and of (2R)-2,3-dihydroxy-3-methylbutanoate (2,3-dihydroxyisovalerate) into 2-oxo-3-methylbutanoate (2-oxoisovalerate), the penultimate precursor to L-isoleucine and L-valine, respectively. This chain is Dihydroxy-acid dehydratase, found in Picrophilus torridus (strain ATCC 700027 / DSM 9790 / JCM 10055 / NBRC 100828 / KAW 2/3).